A 687-amino-acid chain; its full sequence is Polyphosphate kinase (687 aa).

An ATP-binding site is contributed by asparagine 45. Positions 375 and 405 each coordinate Mg(2+). Histidine 435 acts as the Phosphohistidine intermediate in catalysis. ATP is bound by residues tyrosine 472, arginine 568, and histidine 596.

It belongs to the polyphosphate kinase 1 (PPK1) family. Requires Mg(2+) as cofactor. An intermediate of this reaction is the autophosphorylated ppk in which a phosphate is covalently linked to a histidine residue through a N-P bond.

The catalysed reaction is [phosphate](n) + ATP = [phosphate](n+1) + ADP. Functionally, catalyzes the reversible transfer of the terminal phosphate of ATP to form a long-chain polyphosphate (polyP). The polypeptide is Polyphosphate kinase (Burkholderia ambifaria (strain ATCC BAA-244 / DSM 16087 / CCUG 44356 / LMG 19182 / AMMD) (Burkholderia cepacia (strain AMMD))).